The primary structure comprises 255 residues: Syntaxin-6 (255 aa).

At Ser-2 the chain carries N-acetylserine. Ser-2 bears the Phosphoserine mark. An interaction with BLTP3B region spans residues 2-112 (SMEDPFFVVK…KDQMSASSVQ (111 aa)). A required for interaction with VPS51 region spans residues 2 to 168 (SMEDPFFVVK…QAQQQLIVEQ (167 aa)). Residues 2-234 (SMEDPFFVVK…VSHMTSDRRQ (233 aa)) lie on the Cytoplasmic side of the membrane. Residues 41–74 (EEIDWTTNELRNNLRSIEWDLEDLDETISIVEAN) adopt a coiled-coil conformation. Phosphoserine occurs at positions 129 and 152. Positions 163 to 225 (QLIVEQQDEQ…DNVMKKLAKV (63 aa)) constitute a t-SNARE coiled-coil homology domain. The chain crosses the membrane as a helical; Anchor for type IV membrane protein span at residues 235 to 255 (WCAIAILFAVLLVVLTLFLVL).

Belongs to the syntaxin family. Identified in a complex containing STX6, STX12, VAMP4 and VTI1A. Binds EEA1. Interacts with VPS45A and GOPC. Interacts with MARCHF2; the interaction promotes MARCHF2-mediated ubiquitination and degradation of CFTR. Interacts with MARCHF3. Interacts with BLTP3B (via C-terminal coiled-coil domain). Interacts with BAIAP3; this interaction is increased in the presence of calcium. Interacts (via N-terminus) with VPS51. Interacts with VPS13B. In terms of tissue distribution, widely expressed, with relatively higher expression in brain, lung and kidney.

It is found in the golgi apparatus membrane. The protein resides in the golgi apparatus. Its subcellular location is the trans-Golgi network membrane. The protein localises to the recycling endosome membrane. Functionally, SNARE promoting movement of transport vesicles to target membranes. Targets endosomes to the trans-Golgi network, and may therefore function in retrograde trafficking. Together with SNARE STX12, promotes movement of vesicles from endosomes to the cell membrane, and may therefore function in the endocytic recycling pathway. The chain is Syntaxin-6 (Stx6) from Rattus norvegicus (Rat).